The primary structure comprises 1191 residues: Pyruvate-flavodoxin oxidoreductase (1191 aa).

4Fe-4S ferredoxin-type domains follow at residues 687 to 716 (QVCSWDADLCIQCNKCVMVCPHAALRVKAV) and 744 to 773 (YVLALSPEDCTGCGICVEACPGKDKATGAR). Residues C696, C699, C702, C706, C753, C756, C759, C763, C825, C828, C853, and C1085 each contribute to the [4Fe-4S] cluster site.

Belongs to the pyruvate:ferredoxin/flavodoxin oxidoreductase family. It depends on [4Fe-4S] cluster as a cofactor.

The catalysed reaction is oxidized [flavodoxin] + pyruvate + CoA + 2 H(+) = reduced [flavodoxin] + acetyl-CoA + CO2. Oxidoreductase required for the transfer of electrons from pyruvate to flavodoxin, which reduces nitrogenase. The protein is Pyruvate-flavodoxin oxidoreductase (nifJ) of Rhodospirillum rubrum (strain ATCC 11170 / ATH 1.1.1 / DSM 467 / LMG 4362 / NCIMB 8255 / S1).